The sequence spans 208 residues: Ribonuclease HII (208 aa).

Positions 1–205 (MIVVGIDEAG…LQEIAPNYYI (205 aa)) constitute an RNase H type-2 domain. Positions 7, 8, and 104 each coordinate a divalent metal cation.

It belongs to the RNase HII family. Mn(2+) serves as cofactor. Requires Mg(2+) as cofactor.

The protein resides in the cytoplasm. It carries out the reaction Endonucleolytic cleavage to 5'-phosphomonoester.. Endonuclease that specifically degrades the RNA of RNA-DNA hybrids. The protein is Ribonuclease HII of Sulfurisphaera tokodaii (strain DSM 16993 / JCM 10545 / NBRC 100140 / 7) (Sulfolobus tokodaii).